The following is a 312-amino-acid chain: Small ribosomal subunit protein uS2 (312 aa).

The protein belongs to the universal ribosomal protein uS2 family.

The polypeptide is Small ribosomal subunit protein uS2 (Ruthia magnifica subsp. Calyptogena magnifica).